We begin with the raw amino-acid sequence, 389 residues long: S-adenosylmethionine synthase 3 (389 aa).

Residue E9 participates in Mg(2+) binding. H15 is a binding site for ATP. Residue E43 coordinates K(+). L-methionine-binding residues include E56 and Q99. Residues 167–169, 235–238, D246, 252–253, A269, K273, and K277 each bind ATP; these read DGK, SGRF, and RK. D246 is a binding site for L-methionine. K277 contacts L-methionine.

This sequence belongs to the AdoMet synthase family. Homotetramer. It depends on Mn(2+) as a cofactor. The cofactor is Mg(2+). Co(2+) is required as a cofactor. K(+) serves as cofactor.

It is found in the cytoplasm. It catalyses the reaction L-methionine + ATP + H2O = S-adenosyl-L-methionine + phosphate + diphosphate. It participates in amino-acid biosynthesis; S-adenosyl-L-methionine biosynthesis; S-adenosyl-L-methionine from L-methionine: step 1/1. In terms of biological role, catalyzes the formation of S-adenosylmethionine from methionine and ATP. The reaction comprises two steps that are both catalyzed by the same enzyme: formation of S-adenosylmethionine (AdoMet) and triphosphate, and subsequent hydrolysis of the triphosphate. The polypeptide is S-adenosylmethionine synthase 3 (METK3) (Vitis vinifera (Grape)).